A 334-amino-acid chain; its full sequence is Mitochondrial ribosome-associated GTPase 1 (334 aa).

The region spanning 36 to 209 (AKGLKKMQSS…LLDTPGVLAP (174 aa)) is the CP-type G domain. GTP-binding positions include 83-86 (NKMD), 153-158 (NVGKSS), and glycine 205.

The protein belongs to the TRAFAC class YlqF/YawG GTPase family. MTG1 subfamily. In terms of assembly, associates with the mitochondrial ribosome large subunit; the association occurs in a GTP-dependent manner.

The protein localises to the mitochondrion inner membrane. In terms of biological role, plays a role in the regulation of the mitochondrial ribosome assembly and of translational activity. Displays mitochondrial GTPase activity. The polypeptide is Mitochondrial ribosome-associated GTPase 1 (MTG1) (Homo sapiens (Human)).